Reading from the N-terminus, the 429-residue chain is Enolase (429 aa).

Residue Gln163 coordinates (2R)-2-phosphoglycerate. The Proton donor role is filled by Glu205. Residues Asp242, Glu285, and Asp312 each coordinate Mg(2+). The (2R)-2-phosphoglycerate site is built by Lys337, Arg366, Ser367, and Lys388. The active-site Proton acceptor is the Lys337.

The protein belongs to the enolase family. Mg(2+) serves as cofactor.

It is found in the cytoplasm. Its subcellular location is the secreted. The protein resides in the cell surface. The catalysed reaction is (2R)-2-phosphoglycerate = phosphoenolpyruvate + H2O. The protein operates within carbohydrate degradation; glycolysis; pyruvate from D-glyceraldehyde 3-phosphate: step 4/5. Its function is as follows. Catalyzes the reversible conversion of 2-phosphoglycerate (2-PG) into phosphoenolpyruvate (PEP). It is essential for the degradation of carbohydrates via glycolysis. The sequence is that of Enolase from Aromatoleum aromaticum (strain DSM 19018 / LMG 30748 / EbN1) (Azoarcus sp. (strain EbN1)).